The primary structure comprises 42 residues: MRDLKTYLSVAPVLSTLWFGSLAGLLIEINRLFPDALTFPFF.

A helical transmembrane segment spans residues 7–27 (YLSVAPVLSTLWFGSLAGLLI).

This sequence belongs to the PsaJ family.

The protein localises to the plastid. Its subcellular location is the chloroplast thylakoid membrane. May help in the organization of the PsaE and PsaF subunits. This chain is Photosystem I reaction center subunit IX, found in Lepidium virginicum (Virginia pepperweed).